The primary structure comprises 518 residues: 2-isopropylmalate synthase (518 aa).

Residues Val-5–Tyr-267 form the Pyruvate carboxyltransferase domain. 4 residues coordinate Mn(2+): Asp-14, His-202, His-204, and Asn-238. Positions Ser-392–Asn-518 are regulatory domain.

Belongs to the alpha-IPM synthase/homocitrate synthase family. LeuA type 1 subfamily. Homodimer. The cofactor is Mn(2+).

The protein localises to the cytoplasm. It carries out the reaction 3-methyl-2-oxobutanoate + acetyl-CoA + H2O = (2S)-2-isopropylmalate + CoA + H(+). It participates in amino-acid biosynthesis; L-leucine biosynthesis; L-leucine from 3-methyl-2-oxobutanoate: step 1/4. Catalyzes the condensation of the acetyl group of acetyl-CoA with 3-methyl-2-oxobutanoate (2-ketoisovalerate) to form 3-carboxy-3-hydroxy-4-methylpentanoate (2-isopropylmalate). The sequence is that of 2-isopropylmalate synthase from Buchnera aphidicola subsp. Rhopalosiphum padi.